Here is a 173-residue protein sequence, read N- to C-terminus: Soluble secreted antigen MPT53 (173 aa).

The signal sequence occupies residues 1–38 (MSLRLVSPIKAFADGIVAVAIAVVLMFGLANTPRAVAA). C73 and C76 are oxidised to a cystine.

It belongs to the thioredoxin family.

It localises to the secreted. Functionally, disulfide oxidoreductase that catalyzes the oxidation of reduced, unfolded secreted proteins to form disulfide bonds. Despite a weak homology to thioredoxin this cannot serve as a substrate for thioredoxin reductase. In Mycobacterium bovis (strain ATCC BAA-935 / AF2122/97), this protein is Soluble secreted antigen MPT53 (mpt53).